Reading from the N-terminus, the 306-residue chain is Aspartate carbamoyltransferase catalytic subunit (306 aa).

The carbamoyl phosphate site is built by arginine 55 and threonine 56. L-aspartate is bound at residue lysine 84. Residues arginine 105, histidine 133, and glutamine 136 each coordinate carbamoyl phosphate. Positions 166 and 227 each coordinate L-aspartate. Residues leucine 265 and proline 266 each coordinate carbamoyl phosphate.

It belongs to the aspartate/ornithine carbamoyltransferase superfamily. ATCase family. As to quaternary structure, heterododecamer (2C3:3R2) of six catalytic PyrB chains organized as two trimers (C3), and six regulatory PyrI chains organized as three dimers (R2).

It catalyses the reaction carbamoyl phosphate + L-aspartate = N-carbamoyl-L-aspartate + phosphate + H(+). Its pathway is pyrimidine metabolism; UMP biosynthesis via de novo pathway; (S)-dihydroorotate from bicarbonate: step 2/3. Its function is as follows. Catalyzes the condensation of carbamoyl phosphate and aspartate to form carbamoyl aspartate and inorganic phosphate, the committed step in the de novo pyrimidine nucleotide biosynthesis pathway. This chain is Aspartate carbamoyltransferase catalytic subunit, found in Neisseria meningitidis serogroup C (strain 053442).